Consider the following 668-residue polypeptide: Ankyrin repeat domain-containing protein OPG023 (668 aa).

9 ANK repeats span residues 31–64, 101–131, 135–166, 199–231, 235–266, 277–311, 334–368, 458–487, and 491–521; these read FKNN…PLHK, NDFN…DFSV, KHHS…SVIY, YIIS…NPSS, NYCT…NTAY, RGIM…PHGI, NSDV…VVNK, RGET…DVNI, and NGYT…TLDC. Positions 586–666 are PRANC/F-box-like; the sequence is GNTMFSLIFT…PYTIKYKIFE (81 aa).

Belongs to the orthopoxvirus OPG023 family. In terms of assembly, interacts (via N-terminus) with host RELA. Interacts (via PRANC/F-box-like domain) with the SKP1 component of the host SCF ubiquitin ligase complex.

Substrate-specific adapter of SKP1-containing E3 ubiquitin-protein ligases which mediate the ubiquitination and subsequent proteasomal degradation of host target proteins. Prevents activation and subsequent nuclear localization of NF-kappa-B in infected cells, by targeting NF-kappa-B RELA subunit to the SCF E3 ligase complex. This chain is Ankyrin repeat domain-containing protein OPG023 (OPG023), found in Bos taurus (Bovine).